The following is a 217-amino-acid chain: Phosphatidylserine decarboxylase proenzyme (217 aa).

Serine 183 serves as the catalytic Schiff-base intermediate with substrate; via pyruvic acid. Serine 183 bears the Pyruvic acid (Ser); by autocatalysis mark.

Belongs to the phosphatidylserine decarboxylase family. PSD-A subfamily. In terms of assembly, heterodimer of a large membrane-associated beta subunit and a small pyruvoyl-containing alpha subunit. Requires pyruvate as cofactor. In terms of processing, is synthesized initially as an inactive proenzyme. Formation of the active enzyme involves a self-maturation process in which the active site pyruvoyl group is generated from an internal serine residue via an autocatalytic post-translational modification. Two non-identical subunits are generated from the proenzyme in this reaction, and the pyruvate is formed at the N-terminus of the alpha chain, which is derived from the carboxyl end of the proenzyme. The post-translation cleavage follows an unusual pathway, termed non-hydrolytic serinolysis, in which the side chain hydroxyl group of the serine supplies its oxygen atom to form the C-terminus of the beta chain, while the remainder of the serine residue undergoes an oxidative deamination to produce ammonia and the pyruvoyl prosthetic group on the alpha chain.

It localises to the cell membrane. The catalysed reaction is a 1,2-diacyl-sn-glycero-3-phospho-L-serine + H(+) = a 1,2-diacyl-sn-glycero-3-phosphoethanolamine + CO2. The protein operates within phospholipid metabolism; phosphatidylethanolamine biosynthesis; phosphatidylethanolamine from CDP-diacylglycerol: step 2/2. Functionally, catalyzes the formation of phosphatidylethanolamine (PtdEtn) from phosphatidylserine (PtdSer). This is Phosphatidylserine decarboxylase proenzyme from Cupriavidus pinatubonensis (strain JMP 134 / LMG 1197) (Cupriavidus necator (strain JMP 134)).